Here is a 145-residue protein sequence, read N- to C-terminus: D-aminoacyl-tRNA deacylase (145 aa).

Residues 137-138 carry the Gly-cisPro motif, important for rejection of L-amino acids motif; the sequence is GP.

It belongs to the DTD family. In terms of assembly, homodimer.

The protein resides in the cytoplasm. The catalysed reaction is glycyl-tRNA(Ala) + H2O = tRNA(Ala) + glycine + H(+). It carries out the reaction a D-aminoacyl-tRNA + H2O = a tRNA + a D-alpha-amino acid + H(+). In terms of biological role, an aminoacyl-tRNA editing enzyme that deacylates mischarged D-aminoacyl-tRNAs. Also deacylates mischarged glycyl-tRNA(Ala), protecting cells against glycine mischarging by AlaRS. Acts via tRNA-based rather than protein-based catalysis; rejects L-amino acids rather than detecting D-amino acids in the active site. By recycling D-aminoacyl-tRNA to D-amino acids and free tRNA molecules, this enzyme counteracts the toxicity associated with the formation of D-aminoacyl-tRNA entities in vivo and helps enforce protein L-homochirality. The chain is D-aminoacyl-tRNA deacylase from Alteromonas mediterranea (strain DSM 17117 / CIP 110805 / LMG 28347 / Deep ecotype).